The chain runs to 217 residues: 3,4-dihydroxy-2-butanone 4-phosphate synthase (217 aa).

Residues 40-41, aspartate 45, 153-157, and glutamate 177 each bind D-ribulose 5-phosphate; these read RE and RRGHT. A Mg(2+)-binding site is contributed by glutamate 41. Histidine 156 is a Mg(2+) binding site.

It belongs to the DHBP synthase family. In terms of assembly, homodimer. Mg(2+) serves as cofactor. The cofactor is Mn(2+).

It carries out the reaction D-ribulose 5-phosphate = (2S)-2-hydroxy-3-oxobutyl phosphate + formate + H(+). It functions in the pathway cofactor biosynthesis; riboflavin biosynthesis; 2-hydroxy-3-oxobutyl phosphate from D-ribulose 5-phosphate: step 1/1. Its function is as follows. Catalyzes the conversion of D-ribulose 5-phosphate to formate and 3,4-dihydroxy-2-butanone 4-phosphate. The chain is 3,4-dihydroxy-2-butanone 4-phosphate synthase from Aliivibrio fischeri (Vibrio fischeri).